Consider the following 397-residue polypeptide: Methyltransferase/ribosomally synthesized type I borosin cyclic peptide precursor mroMa1 (397 aa).

A methyltransferase domain region spans residues 1-246 (MALKKPGSLT…TTSTFYVPPR (246 aa)). Residues arginine 70, tyrosine 74, and tyrosine 96 contribute to the active site. 8 residues coordinate S-adenosyl-L-methionine: tyrosine 96, histidine 98, valine 101, alanine 128, glutamine 170, glycine 208, serine 239, and threonine 240. A clasp domain region spans residues 247 to 365 (TPAPIDPKAV…GPIFVVMRQL (119 aa)). A precursor leader region spans residues 366-388 (PSAIASGQEPSQEEIARADDATA). N-methylisoleucine is present on residues isoleucine 391 and isoleucine 392. Tyrosine 393 carries the post-translational modification N-methyltyrosine. Isoleucine 394 carries the post-translational modification N-methylisoleucine. Valine 395 is subject to N-methylvaline.

In the N-terminal section; belongs to the precorrin methyltransferase family. In terms of assembly, homodimer. In terms of processing, mroMA automethylates at Ile-391, Ile-392, Tyr-393, Ile-394 and Val-395 before being processed by the a prolyloligopeptidase which likely forms a peptidyl ester upon removal of the follower propeptide, which then undergoes macrocyclization with the N-terminus of the modified core peptide. Peptide backbone alpha-N-methylations change the physicochemical properties of amide bonds to provide structural constraints and other favorable characteristics including biological membrane permeability to peptides.

It functions in the pathway secondary metabolite biosynthesis. Fusion protein of the methyltransferase mroM1 and a type I borosin core peptide; part of the gene cluster that mediates the biosynthesis of a type I borosin, a highly methylated cyclic peptide with potent biological activities. Type I borosins derive from the C-terminus of the fusion protein, and it is the same protein that methylates its own C-terminus using S-adenosyl methionine (SAM). The C-terminus is subsequently cleaved off and macrocyclized by a prolyloligopeptidase to give the final product. In Mycena rosella (Pink bonnet), this protein is Methyltransferase/ribosomally synthesized type I borosin cyclic peptide precursor mroMa1.